A 229-amino-acid polypeptide reads, in one-letter code: Non-structural protein P8 (229 aa).

The next 2 membrane-spanning stretches (helical) occupy residues 119 to 139 (IIHM…VCTL) and 162 to 182 (SLNP…MVCA).

The protein belongs to the orbivirus NS3 family. As to quaternary structure, forms homooligomers via coiled-coil motif. Interacts with host OPTN; this interaction inhibits innate immune response.

The protein localises to the host cell membrane. It localises to the host Golgi apparatus. Functionally, plays a role in the inhibition of host innate immune response. Interacts with host OPTN and thus inhibits the recruitment of TBK1 to the host Golgi apparatus. In turn, downstream partner IRF3 cannot be activated and IFN-beta production is impaired. In terms of biological role, facilitates viral particle release either by increasing plasma membrane permeability through a viroporin-like activity or by viral budding. The sequence is that of Non-structural protein P8 (Segment-10) from Bluetongue virus 1 (isolate Australia) (BTV 1).